A 66-amino-acid chain; its full sequence is Beta-defensin 107A (66 aa).

An N-terminal signal peptide occupies residues 1 to 22; it reads MKIFFFIFAALILLAQIFQART. Intrachain disulfides connect Cys37–Cys51 and Cys41–Cys60.

Belongs to the beta-defensin family.

The protein resides in the secreted. In terms of biological role, has antibacterial activity. In Macaca fascicularis (Crab-eating macaque), this protein is Beta-defensin 107A (DEFB107A).